Consider the following 458-residue polypeptide: UDP-N-acetylmuramoylalanine--D-glutamate ligase (458 aa).

124-130 lines the ATP pocket; sequence GSDGKTT.

This sequence belongs to the MurCDEF family.

Its subcellular location is the cytoplasm. It carries out the reaction UDP-N-acetyl-alpha-D-muramoyl-L-alanine + D-glutamate + ATP = UDP-N-acetyl-alpha-D-muramoyl-L-alanyl-D-glutamate + ADP + phosphate + H(+). It participates in cell wall biogenesis; peptidoglycan biosynthesis. Functionally, cell wall formation. Catalyzes the addition of glutamate to the nucleotide precursor UDP-N-acetylmuramoyl-L-alanine (UMA). In Clostridium botulinum (strain 657 / Type Ba4), this protein is UDP-N-acetylmuramoylalanine--D-glutamate ligase.